A 178-amino-acid chain; its full sequence is Small ribosomal subunit protein uS5 (178 aa).

One can recognise an S5 DRBM domain in the interval 13–76 (LEERVVQINR…EAAKRNLIRV (64 aa)). Residues 156-178 (ASRRDMTPQELMERRTRRETEAA) are disordered.

The protein belongs to the universal ribosomal protein uS5 family. As to quaternary structure, part of the 30S ribosomal subunit. Contacts proteins S4 and S8.

Its function is as follows. With S4 and S12 plays an important role in translational accuracy. Functionally, located at the back of the 30S subunit body where it stabilizes the conformation of the head with respect to the body. The polypeptide is Small ribosomal subunit protein uS5 (Chloroflexus aurantiacus (strain ATCC 29364 / DSM 637 / Y-400-fl)).